The primary structure comprises 705 residues: Polyribonucleotide nucleotidyltransferase (705 aa).

The Mg(2+) site is built by D487 and D493. The region spanning 554-613 (PKILTMTINPDKIRDVIGPSGKQINKIIEETGVKIDIEQDGTIFISSTDESGNQKAKKII) is the KH domain. The S1 motif domain occupies 623 to 691 (GQLYLGKVKR…KQGRVNLSRK (69 aa)).

The protein belongs to the polyribonucleotide nucleotidyltransferase family. As to quaternary structure, homodimer. Component of a possible RNA degradosome complex composed of rny, rnjA, rnjB, pnp, pfkA and eno (although rnjA and rnjB's presence is unclear). RNA helicase CshA may also be a member of this complex. Mg(2+) serves as cofactor.

The protein resides in the cytoplasm. It carries out the reaction RNA(n+1) + phosphate = RNA(n) + a ribonucleoside 5'-diphosphate. Its function is as follows. Involved in mRNA degradation. Catalyzes the phosphorolysis of single-stranded polyribonucleotides processively in the 3'- to 5'-direction. Necessary for competence development in Bacillus subtilis. May be necessary for modification of the srfA transcript (stabilization or translation activation). Involved in processing precursor type I toxin-antitoxin RNAs antitoxin SR4 and SR5 RNAs to their mature forms. The polypeptide is Polyribonucleotide nucleotidyltransferase (Bacillus subtilis (strain 168)).